The following is a 1009-amino-acid chain: Delphilin (1009 aa).

Disordered stretches follow at residues 28-82 (CRSK…SNTM), 170-193 (EGPV…RSRS), 322-369 (ASPD…SRDT), 414-635 (ELSS…SDNN), and 990-1009 (SETQ…PLAW). Residues 44-53 (RSQDHHERPQ) are compositionally biased toward basic and acidic residues. The 78-residue stretch at 95-172 (TIRVYRGKKS…MPSLVVEEGP (78 aa)) folds into the PDZ domain. A compositionally biased stretch (polar residues) spans 322–332 (ASPDSVDSNPY). Low complexity-rich tracts occupy residues 334 to 352 (SLDS…SPLP) and 427 to 439 (DDST…SGSD). 3 stretches are compositionally biased toward pro residues: residues 441-455 (IPPP…PPPL), 462-477 (SPLP…PPPA), and 484-493 (IAPPPPPPRP). Residues 521-535 (SSPQPSSQPILQLHQ) show a composition bias toward low complexity. Over residues 557-602 (AQHTRLQHPSQSIYQSQQTTVPRTSPSLTKQKSLHSQPSQQSFEGT) the composition is skewed to polar residues. Residues 607-628 (VPPPPPPPLPPPCDPPPLPKPS) are compositionally biased toward pro residues. An FH2 domain is found at 629–1009 (PKASDNNHMS…SPRIASPLAW (381 aa)).

The protein localises to the postsynaptic cell membrane. Functionally, postsynaptic scaffolding protein. This is Delphilin (grid2ip) from Danio rerio (Zebrafish).